The chain runs to 800 residues: Small ribosomal subunit protein uS3c (800 aa).

Residues 1-118 (MGQKVHPSGF…LQVKKDILVK (118 aa)) form an S3-like 1st part region. The segment at 119 to 664 (LQKTRQYLTN…FLDCKFEELE (546 aa)) is intervening sequence (IVS). The interval 665-800 (RRKTMWVQNL…TKLVTESTGA (136 aa)) is S3-like 2nd part.

Belongs to the universal ribosomal protein uS3 family. As to quaternary structure, part of the 30S ribosomal subunit.

Its subcellular location is the plastid. It localises to the chloroplast. The polypeptide is Small ribosomal subunit protein uS3c (rps3) (Chlamydomonas moewusii (Chlamydomonas eugametos)).